Reading from the N-terminus, the 276-residue chain is Undecaprenyl-diphosphatase 1 (276 aa).

The next 8 membrane-spanning stretches (helical) occupy residues 1 to 21 (MSLW…LFPV), 44 to 64 (QLLP…LWYF), 87 to 107 (GHLM…GLLL), 114 to 134 (VFHD…LLWL), 150 to 170 (LTFK…IPGF), 190 to 210 (AAEF…LLEL), 222 to 242 (DALL…RFLM), and 251 to 271 (LASF…WFMF).

This sequence belongs to the UppP family.

The protein localises to the cell inner membrane. It catalyses the reaction di-trans,octa-cis-undecaprenyl diphosphate + H2O = di-trans,octa-cis-undecaprenyl phosphate + phosphate + H(+). In terms of biological role, catalyzes the dephosphorylation of undecaprenyl diphosphate (UPP). Confers resistance to bacitracin. In Burkholderia pseudomallei (strain 1106a), this protein is Undecaprenyl-diphosphatase 1.